The sequence spans 302 residues: Gap junction delta-2 protein (302 aa).

The Cytoplasmic segment spans residues 1–19 (MGEWTILERLLEAAVQQHS). A helical transmembrane segment spans residues 20–42 (TMIGRILLTVVVIFRILVVAIVG). The Extracellular segment spans residues 43 to 75 (ETVYDDEQTMFVCNTLQPGCNQACYDKAFPISH). Residues 76–98 (IRYWVFQIIMVCTPSLCFITYSV) traverse the membrane as a helical segment. Over 99 to 177 (HQSSKQRERQ…KIRRQEGISR (79 aa)) the chain is Cytoplasmic. Residues 178–200 (FYIIQVVFRNALEIGFLMGQYFL) traverse the membrane as a helical segment. Topologically, residues 201–232 (YGFKVPSMYECNRYPCVKMVECYVSRPTEKTV) are extracellular. A helical membrane pass occupies residues 233 to 255 (FLVFMFAVSGLCVILNLAELNHL). The Cytoplasmic segment spans residues 256-302 (GWRKIKTAVRGAQERRKSIYEIRNKDSPHRIGVPNFGRTQSSDSAYV).

The protein belongs to the connexin family. Delta-type subfamily. In terms of assembly, a connexon is composed of a hexamer of connexins. As to expression, retinal specific.

The protein resides in the cell membrane. The protein localises to the cell junction. It localises to the gap junction. In terms of biological role, one gap junction consists of a cluster of closely packed pairs of transmembrane channels, the connexons, through which materials of low MW diffuse from one cell to a neighboring cell. This Leucoraja erinaceus (Little skate) protein is Gap junction delta-2 protein.